The primary structure comprises 291 residues: Beta-lactamase CTX-M-25 (291 aa).

An N-terminal signal peptide occupies residues 1–30; sequence MMRKSVRRAMLMTTACVSLLLASVPLCAQA. Ser73 functions as the Nucleophile; acyl-ester intermediate in the catalytic mechanism. Lys76, Ser133, Glu169, and Ser240 together coordinate a beta-lactam.

Belongs to the class-A beta-lactamase family. Monomer.

The protein localises to the secreted. It carries out the reaction a beta-lactam + H2O = a substituted beta-amino acid. With respect to regulation, inhibited by the beta-lactamase-blocking agents clavulanic acid and tazobactam; in the DH10B strain. Extended-spectrum beta-lactamase (ESBL) which confers resistance to penicillins, as well as first, second and third-generation cephalosporins. Has cefotaxime-hydrolyzing activity. Inactive against cephalosporin antibiotic, cefoxitin, and the carbapenem, imipenem. The chain is Beta-lactamase CTX-M-25 from Escherichia coli.